Here is a 231-residue protein sequence, read N- to C-terminus: MAIRCVASRKTLAGLKETSSRLLRIRGIQTFTLPDLPYDYGALEPAISGEIMQIHHQKHHQAYVTNYNNALEQLDQAVNKGDASTVVKLQSAIKFNGGGHVNHSIFWKNLAPSSEGGGEPPKGSLGSAIDAHFGSLEGLVKKMSAEGAAVQGSGWVWLGLDKELKKLVVDTTANQDPLVTKGGSLVPLVGIDVWEHAYYLQYKNVRPEYLKNVWKVINWKYASEVYEKENN.

The transit peptide at 1–29 (MAIRCVASRKTLAGLKETSSRLLRIRGIQ) directs the protein to the mitochondrion. The Mn(2+) site is built by His-55 and His-103. Residue Ser-124 is modified to Phosphoserine. The Mn(2+) site is built by Asp-192 and His-196.

It belongs to the iron/manganese superoxide dismutase family. In terms of assembly, homotetramer. Requires Mn(2+) as cofactor.

The protein localises to the mitochondrion matrix. The catalysed reaction is 2 superoxide + 2 H(+) = H2O2 + O2. Activated by MTM1. Its function is as follows. Destroys superoxide anion radicals which are normally produced within the cells and which are toxic to biological systems. The protein is Superoxide dismutase [Mn] 1, mitochondrial (MSD1) of Arabidopsis thaliana (Mouse-ear cress).